The sequence spans 201 residues: Imidazole glycerol phosphate synthase subunit HisH (201 aa).

A Glutamine amidotransferase type-1 domain is found at 1–201 (MVFIADYGAG…LQVLKNFAEF (201 aa)). Catalysis depends on Cys79, which acts as the Nucleophile. Catalysis depends on residues His183 and Glu185.

Heterodimer of HisH and HisF.

It localises to the cytoplasm. It catalyses the reaction 5-[(5-phospho-1-deoxy-D-ribulos-1-ylimino)methylamino]-1-(5-phospho-beta-D-ribosyl)imidazole-4-carboxamide + L-glutamine = D-erythro-1-(imidazol-4-yl)glycerol 3-phosphate + 5-amino-1-(5-phospho-beta-D-ribosyl)imidazole-4-carboxamide + L-glutamate + H(+). The enzyme catalyses L-glutamine + H2O = L-glutamate + NH4(+). The protein operates within amino-acid biosynthesis; L-histidine biosynthesis; L-histidine from 5-phospho-alpha-D-ribose 1-diphosphate: step 5/9. Its function is as follows. IGPS catalyzes the conversion of PRFAR and glutamine to IGP, AICAR and glutamate. The HisH subunit catalyzes the hydrolysis of glutamine to glutamate and ammonia as part of the synthesis of IGP and AICAR. The resulting ammonia molecule is channeled to the active site of HisF. This chain is Imidazole glycerol phosphate synthase subunit HisH, found in Chlorobaculum tepidum (strain ATCC 49652 / DSM 12025 / NBRC 103806 / TLS) (Chlorobium tepidum).